The following is a 74-amino-acid chain: Brevinin-2Tb (74 aa).

The first 22 residues, 1–22 (MFTMKKSLLLFFFLGTISLSLC), serve as a signal peptide directing secretion. Residues 23 to 40 (QEERNADEDDGEMTEEEK) constitute a propeptide that is removed on maturation. The cysteines at positions 68 and 74 are disulfide-linked.

The protein belongs to the frog skin active peptide (FSAP) family. Brevinin subfamily. In terms of tissue distribution, expressed by the skin glands.

Its subcellular location is the secreted. In terms of biological role, antimicrobial peptide. The sequence is that of Brevinin-2Tb from Rana temporaria (European common frog).